The following is a 522-amino-acid chain: MSTSDHDRLLIIDFGSQVTQLIARRLRELNVYCEIHPFNLVDDAFLDAFGAKAVIFSGGPSSVFADGAPMPPASVFERGVPILGICYGQQVMMHCLGGKVERGHGTAEFGRAYVTPTAQKLDMLQGWFETDQDREQVWMSHGDHVSQIAPGFEVFGTSPNAPFAITADTTRHFYAVQFHPEVHHTPNGARLYENFVRLAGFKGDWTMGAYREEAIAKIREQVGSGRVICALSGGVDSSVAAVLIHEAIGDQLTCVYVDHGLMRKDESAQVVGMFREHYNLPLIHADESDLFLGKLEGVSDPETKRKIIGGLFIEVFEKYAKEIGGADFLAQGTLYPDVIESVSFSGGPSVTIKSHHNVGGLPERMNMQLVEPLRELFKDEVRALGHELGLPASFIGRHPFPGPGLAIRCPGEITREKLDILREADAVYIDQIRKHGLYDEIWQAFVAILPVRTVGVMGDGRTYDFACALRAVTSVDGMTADYYPFTHEFLGETATRIINEVPGINRVTYDITSKPPGTIEWE.

The region spanning 8-204 (RLLIIDFGSQ…FVRLAGFKGD (197 aa)) is the Glutamine amidotransferase type-1 domain. Residue Cys86 is the Nucleophile of the active site. Residues His179 and Glu181 contribute to the active site. A GMPS ATP-PPase domain is found at 205-397 (WTMGAYREEA…LGLPASFIGR (193 aa)). 232–238 (SGGVDSS) contacts ATP.

Homodimer.

The catalysed reaction is XMP + L-glutamine + ATP + H2O = GMP + L-glutamate + AMP + diphosphate + 2 H(+). It participates in purine metabolism; GMP biosynthesis; GMP from XMP (L-Gln route): step 1/1. Functionally, catalyzes the synthesis of GMP from XMP. The protein is GMP synthase [glutamine-hydrolyzing] of Roseobacter denitrificans (strain ATCC 33942 / OCh 114) (Erythrobacter sp. (strain OCh 114)).